The primary structure comprises 142 residues: Hemoglobin subunit pi (142 aa).

Positions Ala-2–Arg-142 constitute a Globin domain. Residues His-59 and His-88 each coordinate heme b.

Belongs to the globin family.

Functionally, the pi' chain is the counterpart of the alpha chain in the major early embryonic hemoglobin P. The sequence is that of Hemoglobin subunit pi from Gallus gallus (Chicken).